The chain runs to 122 residues: Large ribosomal subunit protein uL18 (122 aa).

It belongs to the universal ribosomal protein uL18 family. In terms of assembly, part of the 50S ribosomal subunit; part of the 5S rRNA/L5/L18/L25 subcomplex. Contacts the 5S and 23S rRNAs.

Functionally, this is one of the proteins that bind and probably mediate the attachment of the 5S RNA into the large ribosomal subunit, where it forms part of the central protuberance. The polypeptide is Large ribosomal subunit protein uL18 (Mycobacterium ulcerans (strain Agy99)).